The chain runs to 88 residues: Actobindin (88 aa).

The residue at position 1 (methionine 1) is an N-acetylmethionine. Residues 1-22 (MNPELQSAIGQGAALKHAETVD) are disordered. Residue lysine 35 is modified to N6,N6,N6-trimethyllysine. A WH2 domain is found at 37 to 54 (DRSSFLEEVAKPHELKHA). Lysine 72 is modified (N6,N6,N6-trimethyllysine).

Monomer.

Functionally, is able to bind two actin monomers at high concentrations of G-actin. The polypeptide is Actobindin (Acanthamoeba castellanii (Amoeba)).